Reading from the N-terminus, the 39-residue chain is Potassium channel toxin alpha-KTx 2.16 (39 aa).

Cystine bridges form between Cys-7–Cys-29, Cys-13–Cys-34, and Cys-17–Cys-36. Ile-39 carries the post-translational modification Isoleucine amide.

This sequence belongs to the short scorpion toxin superfamily. Potassium channel inhibitor family. Alpha-KTx 02 subfamily. As to expression, expressed by the venom gland.

The protein resides in the secreted. In terms of biological role, blocks human voltage-gated potassium channels Kv1.2/KCNA2 (IC(50)=0.7 nM), Kv1.3/KCNA3 (IC(50)=26.2 nM) and blocks intermediate conductance calcium-activated potassium channel KCa3.1/KCNN4 (IC(50)=56 nM). This chain is Potassium channel toxin alpha-KTx 2.16, found in Centruroides tecomanus (Scorpion).